Here is a 151-residue protein sequence, read N- to C-terminus: Probable ribonuclease P/MRP protein subunit POP5 (151 aa).

This sequence belongs to the eukaryotic/archaeal RNase P protein component 2 family. As to quaternary structure, component of nuclear RNase P and RNase MRP ribonucleoproteins. Interacts with GAF1/RPP30.

The protein resides in the nucleus. It is found in the nucleolus. Its function is as follows. Essential protein required during embryogenesis. Component of ribonuclease P, a protein complex that generates mature tRNA molecules by cleaving their 5'-ends. Also a component of RNase MRP. This chain is Probable ribonuclease P/MRP protein subunit POP5 (EMB1687), found in Arabidopsis thaliana (Mouse-ear cress).